A 456-amino-acid polypeptide reads, in one-letter code: Histidine--tRNA ligase (456 aa).

The interval 1–20 (MTQSENVAAAGGAKTEPKVR) is disordered.

The protein belongs to the class-II aminoacyl-tRNA synthetase family. Homodimer.

Its subcellular location is the cytoplasm. It catalyses the reaction tRNA(His) + L-histidine + ATP = L-histidyl-tRNA(His) + AMP + diphosphate + H(+). The chain is Histidine--tRNA ligase from Cupriavidus necator (strain ATCC 17699 / DSM 428 / KCTC 22496 / NCIMB 10442 / H16 / Stanier 337) (Ralstonia eutropha).